Consider the following 401-residue polypeptide: Probable tRNA sulfurtransferase (401 aa).

Residues 60–165 (EPIIDKLKTV…QDGTYVTCHD (106 aa)) enclose the THUMP domain. Residues 183-184 (ML), 208-209 (HF), Arg265, Gly287, and Gln296 each bind ATP.

Belongs to the ThiI family.

Its subcellular location is the cytoplasm. It catalyses the reaction [ThiI sulfur-carrier protein]-S-sulfanyl-L-cysteine + a uridine in tRNA + 2 reduced [2Fe-2S]-[ferredoxin] + ATP + H(+) = [ThiI sulfur-carrier protein]-L-cysteine + a 4-thiouridine in tRNA + 2 oxidized [2Fe-2S]-[ferredoxin] + AMP + diphosphate. The catalysed reaction is [ThiS sulfur-carrier protein]-C-terminal Gly-Gly-AMP + S-sulfanyl-L-cysteinyl-[cysteine desulfurase] + AH2 = [ThiS sulfur-carrier protein]-C-terminal-Gly-aminoethanethioate + L-cysteinyl-[cysteine desulfurase] + A + AMP + 2 H(+). It functions in the pathway cofactor biosynthesis; thiamine diphosphate biosynthesis. Functionally, catalyzes the ATP-dependent transfer of a sulfur to tRNA to produce 4-thiouridine in position 8 of tRNAs, which functions as a near-UV photosensor. Also catalyzes the transfer of sulfur to the sulfur carrier protein ThiS, forming ThiS-thiocarboxylate. This is a step in the synthesis of thiazole, in the thiamine biosynthesis pathway. The sulfur is donated as persulfide by IscS. This chain is Probable tRNA sulfurtransferase, found in Geobacillus thermodenitrificans (strain NG80-2).